A 318-amino-acid polypeptide reads, in one-letter code: Acetyl-coenzyme A carboxylase carboxyl transferase subunit alpha (318 aa).

The CoA carboxyltransferase C-terminal domain occupies 43-293; the sequence is RSQTALRDLY…GDGIAAALKS (251 aa).

The protein belongs to the AccA family. As to quaternary structure, acetyl-CoA carboxylase is a heterohexamer composed of biotin carboxyl carrier protein (AccB), biotin carboxylase (AccC) and two subunits each of ACCase subunit alpha (AccA) and ACCase subunit beta (AccD).

The protein localises to the cytoplasm. It carries out the reaction N(6)-carboxybiotinyl-L-lysyl-[protein] + acetyl-CoA = N(6)-biotinyl-L-lysyl-[protein] + malonyl-CoA. Its pathway is lipid metabolism; malonyl-CoA biosynthesis; malonyl-CoA from acetyl-CoA: step 1/1. In terms of biological role, component of the acetyl coenzyme A carboxylase (ACC) complex. First, biotin carboxylase catalyzes the carboxylation of biotin on its carrier protein (BCCP) and then the CO(2) group is transferred by the carboxyltransferase to acetyl-CoA to form malonyl-CoA. The protein is Acetyl-coenzyme A carboxylase carboxyl transferase subunit alpha of Bartonella bacilliformis (strain ATCC 35685 / KC583 / Herrer 020/F12,63).